The following is a 189-amino-acid chain: HGPRTase-like protein 2 (189 aa).

This sequence belongs to the purine/pyrimidine phosphoribosyltransferase family. Archaeal HPRT subfamily.

Functionally, may catalyze a purine salvage reaction, the substrate is unknown. This is HGPRTase-like protein 2 from Haloarcula marismortui (strain ATCC 43049 / DSM 3752 / JCM 8966 / VKM B-1809) (Halobacterium marismortui).